The primary structure comprises 150 residues: Large ribosomal subunit protein bL9 (150 aa).

The protein belongs to the bacterial ribosomal protein bL9 family.

Functionally, binds to the 23S rRNA. The sequence is that of Large ribosomal subunit protein bL9 from Streptococcus pyogenes serotype M3 (strain SSI-1).